A 611-amino-acid chain; its full sequence is Dehydrogenase pkfF (611 aa).

The N-terminal stretch at 1 to 19 is a signal peptide; it reads MRHTALLPLVSSFIVPALA. 2 N-linked (GlcNAc...) asparagine glycosylation sites follow: N28 and N38. FAD contacts are provided by residues 50–51, 71–72, and 137–140; these read TS, EA, and HYMV. N-linked (GlcNAc...) asparagine glycans are attached at residues N180, N187, N240, N272, N409, and N471. The active-site Proton acceptor is H547. FAD is bound by residues A581 and 592–593; that span reads PQ.

This sequence belongs to the GMC oxidoreductase family. It depends on FAD as a cofactor.

It functions in the pathway secondary metabolite biosynthesis. In terms of biological role, dehydrogenase; part of the gene cluster that mediates the biosynthesis of aspernidine A, a prenylated isoindolinone. The starting point of the biosynthesis of aspernidin A is the production of orsellinaldehyde by the non-reducing polyketide synthase pkfA. Hydroxylation, methylation of one of the phenol groups, and prenylation, presumably catalyzed by the prenyltransferase pkfE, would be needed to yield aspernidine D. Subsequently, the cytochrome P450 monooxygenase pkfB is responsible for hydroxylation of aspernidine D to yield aspernidine E. The dehydrogenase pkfF may be responsible for further oxidation of aspernidine E to form a dialdehyde intermediate which is further transformed in a series of steps, some of which are enzyme-mediated, to generate aspernidine A. The possibility that additional enzymes outside of the cluster are involved in aspernidine A biosynthesis cannot be excluded. The polypeptide is Dehydrogenase pkfF (Emericella nidulans (strain FGSC A4 / ATCC 38163 / CBS 112.46 / NRRL 194 / M139) (Aspergillus nidulans)).